Reading from the N-terminus, the 159-residue chain is Phosphopantetheine adenylyltransferase (159 aa).

Thr10 is a substrate binding site. ATP-binding positions include 10–11 (TF) and His18. Substrate contacts are provided by Lys42, Met74, and Arg88. Residues 89–91 (GLR), Glu99, and 124–130 (WSFISSS) contribute to the ATP site.

The protein belongs to the bacterial CoaD family. In terms of assembly, homohexamer. The cofactor is Mg(2+).

Its subcellular location is the cytoplasm. It catalyses the reaction (R)-4'-phosphopantetheine + ATP + H(+) = 3'-dephospho-CoA + diphosphate. Its pathway is cofactor biosynthesis; coenzyme A biosynthesis; CoA from (R)-pantothenate: step 4/5. Reversibly transfers an adenylyl group from ATP to 4'-phosphopantetheine, yielding dephospho-CoA (dPCoA) and pyrophosphate. The protein is Phosphopantetheine adenylyltransferase of Escherichia coli (strain SMS-3-5 / SECEC).